The following is a 301-amino-acid chain: Rhodopsin (301 aa).

Residues 1–18 lie on the Extracellular side of the membrane; that stretch reads LHMIHLHWYQYPPMNPMM. A helical membrane pass occupies residues 19 to 43; that stretch reads YPLLLVFMLITGILCLAGNFVTIWV. The Cytoplasmic portion of the chain corresponds to 44-55; sequence FMNTKSLRTPAN. The chain crosses the membrane as a helical span at residues 56-78; it reads LLVVNLAMSDFLMMFTMFPPMMI. Residues 79–92 are Extracellular-facing; sequence TCYYHTWTLGATFC. An intrachain disulfide couples Cys-92 to Cys-169. Residues 93-115 form a helical membrane-spanning segment; it reads EVYAFLGNLCGCASIWTMVFITF. The 'Ionic lock' involved in activated form stabilization signature appears at 116-118; the sequence is DRY. The Cytoplasmic portion of the chain corresponds to 116–134; it reads DRYNVIVKGVAGEPLSTKK. The chain crosses the membrane as a helical span at residues 135-155; it reads ASLWILTVWVLSFTWCVAPFF. The Extracellular portion of the chain corresponds to 156-182; the sequence is GWNRYVPEGNLTGCGTDYLSEDILSRS. Asn-165 carries an N-linked (GlcNAc...) asparagine glycan. A helical membrane pass occupies residues 183–204; the sequence is YLYIYSTWVYFLPLAITIYCYV. Over 205–245 the chain is Cytoplasmic; sequence FIIKAVAAHEKGMRDQAKKMGIKSLRNEEAQKTSAECRLAK. Residues 246 to 267 form a helical membrane-spanning segment; that stretch reads IAMTTVALWFIAWTPYLLINWV. Residues 268–278 lie on the Extracellular side of the membrane; the sequence is GMFARSYLSPV. A helical transmembrane segment spans residues 279-300; the sequence is YTIWGYVFAKANAVYNPIVYAI. Lys-288 carries the N6-(retinylidene)lysine modification.

Belongs to the G-protein coupled receptor 1 family. Opsin subfamily. In terms of assembly, homodimer. Interacts with GNAQ. Post-translationally, contains one covalently linked retinal chromophore.

It is found in the cell projection. The protein resides in the rhabdomere membrane. In terms of biological role, photoreceptor required for image-forming vision at low light intensity. Can use both retinal and 3-dehydroretinal as visual pigment. Light-induced isomerization of 11-cis to all-trans retinal triggers a conformational change that activates signaling via G-proteins. Signaling via GNAQ probably mediates the activation of phospholipase C. The polypeptide is Rhodopsin (RHO) (Lacunicambarus ludovicianus (Painted devil crayfish)).